Here is a 1179-residue protein sequence, read N- to C-terminus: Integrin alpha-1 (1179 aa).

An N-terminal signal peptide occupies residues 1–28 (MAPRPRARPGVAVACCWLLTVVLRCCVS). The Extracellular segment spans residues 29–1141 (FNVDVKNSMT…SKDGLPGRVP (1113 aa)). The FG-GAP 1 repeat unit spans residues 30-91 (NVDVKNSMTF…CPVGRGESLP (62 aa)). Residue Asn74 is glycosylated (N-linked (GlcNAc...) asparagine). Cys82 and Cys92 form a disulfide bridge. N-linked (GlcNAc...) asparagine glycans are attached at residues Asn100, Asn105, Asn112, Asn217, Asn317, Asn341, Asn402, Asn418, and Asn460. One copy of the FG-GAP 2 repeat lies at 101-160 (TSIPNVTEVKENMTFGSTLVTNPNGGFLACGPLYAYRCGHLHYTTGICSDVSPTFQVVNS). The VWFA domain occupies 161 to 360 (IAPVQECSTQ…IVKTLGERIF (200 aa)). An FG-GAP 3 repeat occupies 365 to 417 (TADQSAASFEMEMSQTGFSAHYSQDWVMLGAVGAYDWNGTVVMQKASQIIIPR). 4 FG-GAP repeats span residues 422-475 (NVES…DGNI), 476-538 (KILQ…RFEY), 557-615 (SCTT…TIRK), and 619-679 (QRIP…FEPN). 4 residues coordinate Ca(2+): Asp498, Asp500, Asp502, and Asp506. An N-linked (GlcNAc...) asparagine glycan is attached at Asn532. 8 residues coordinate Ca(2+): Asp580, Asn582, Asp584, Asp588, Asp642, Asn644, Asp646, and Asp650. Cys688 and Cys697 form a disulfide bridge. N-linked (GlcNAc...) asparagine glycosylation is found at Asn699, Asn748, and Asn780. Cys703 and Cys756 are joined by a disulfide. Cys808 and Cys814 form a disulfide bridge. Asn840, Asn883, Asn908, Asn915, Asn939, Asn966, Asn974, and Asn1008 each carry an N-linked (GlcNAc...) asparagine glycan. An intrachain disulfide couples Cys878 to Cys886. Intrachain disulfides connect Cys1030-Cys1062 and Cys1065-Cys1072. N-linked (GlcNAc...) asparagine glycans are attached at residues Asn1073, Asn1083, Asn1102, and Asn1113. A helical transmembrane segment spans residues 1142-1164 (LWVILLSAFAGLLLLMLLILALW). At 1165-1179 (KIGFFKRPLKKKMEK) the chain is on the cytoplasmic side. The GFFKR motif signature appears at 1167 to 1171 (GFFKR).

The protein belongs to the integrin alpha chain family. Heterodimer of an alpha and a beta subunit. Alpha-1 associates with beta-1. Interacts with RAB21. Interacts (via cytoplasmic domain) with PTPN2; activates PTPN2 phosphatase activity towards EGFR and negatively regulates EGF signaling.

It is found in the membrane. Integrin alpha-1/beta-1 is a receptor for laminin and collagen. It recognizes the proline-hydroxylated sequence G-F-P-G-E-R in collagen. Involved in anchorage-dependent, negative regulation of EGF-stimulated cell growth. This Homo sapiens (Human) protein is Integrin alpha-1 (ITGA1).